The sequence spans 375 residues: Superinfection exclusion protein (375 aa).

The N-terminal stretch at 1–15 (MIALLILSLACSVSA) is a signal peptide.

The protein belongs to the serpin family. Orthopoxvirus OPG040 subfamily. Interacts with OPG185/A56 protein.

It localises to the virion membrane. The protein localises to the host cell membrane. Functionally, negatively regulates superinfection and syncytium formation in infected host cells. Acts in concert with OPG185/A56 protein at the host cell membrane by interacting with and inhibiting the mature virion entry/fusion complex (EFC). This mechanism ensures that new virions released from the cell cannot enter already infected cells. This is Superinfection exclusion protein (OPG040) from Cynomys gunnisoni (Gunnison's prairie dog).